The sequence spans 345 residues: Methylthioribose-1-phosphate isomerase (345 aa).

Residues 44-46 (RGA), Arg-87, and Gln-194 contribute to the substrate site. Asp-235 (proton donor) is an active-site residue. Residue 245 to 246 (NK) participates in substrate binding.

The protein belongs to the eIF-2B alpha/beta/delta subunits family. MtnA subfamily.

It carries out the reaction 5-(methylsulfanyl)-alpha-D-ribose 1-phosphate = 5-(methylsulfanyl)-D-ribulose 1-phosphate. It participates in amino-acid biosynthesis; L-methionine biosynthesis via salvage pathway; L-methionine from S-methyl-5-thio-alpha-D-ribose 1-phosphate: step 1/6. In terms of biological role, catalyzes the interconversion of methylthioribose-1-phosphate (MTR-1-P) into methylthioribulose-1-phosphate (MTRu-1-P). This chain is Methylthioribose-1-phosphate isomerase, found in Heliobacterium modesticaldum (strain ATCC 51547 / Ice1).